The chain runs to 495 residues: UDP-glycosyltransferase 73E1 (495 aa).

UDP-alpha-D-glucose is bound by residues Ser299, 355-356, 373-381, and 395-398; these read WA, HCGWNSTIE, and FADQ.

Belongs to the UDP-glycosyltransferase family.

May glycosylate diterpenes or flavonols in leaves. The polypeptide is UDP-glycosyltransferase 73E1 (Stevia rebaudiana (Stevia)).